The primary structure comprises 86 residues: RNA-binding protein Hfq (86 aa).

One can recognise a Sm domain in the interval Asp-12 to Val-73.

The protein belongs to the Hfq family. As to quaternary structure, homohexamer.

Its function is as follows. RNA chaperone that binds small regulatory RNA (sRNAs) and mRNAs to facilitate mRNA translational regulation in response to envelope stress, environmental stress and changes in metabolite concentrations. Also binds with high specificity to tRNAs. The protein is RNA-binding protein Hfq of Caldanaerobacter subterraneus subsp. tengcongensis (strain DSM 15242 / JCM 11007 / NBRC 100824 / MB4) (Thermoanaerobacter tengcongensis).